Here is a 299-residue protein sequence, read N- to C-terminus: Somaliensene A/B synthase (299 aa).

7 helical membrane-spanning segments follow: residues 32-49 (WTTLFPATCFVLAAAVHT), 56-72 (TAVAVASGVLYFWLFVY), 110-132 (IAVRVAFPLYGWFLGVLEWALLW), 153-171 (LYAGIGVVAQLAAAWEIVA), 177-194 (AWRWIVTLTITVTLLMSV), 222-241 (VFLCAGFALGPLAIHHFLMA), and 247-269 (WWIVATDVVLGGLSLLLAFRVVL).

This sequence belongs to the UbiA prenyltransferase family. Requires Mg(2+) as cofactor.

It is found in the cell membrane. It carries out the reaction (2E,6E,10E,14E)-geranylfarnesyl diphosphate = somaliensene A + diphosphate. The catalysed reaction is (2E,6E,10E,14E)-geranylfarnesyl diphosphate = (-)-somaliensene B + diphosphate. It functions in the pathway secondary metabolite biosynthesis; terpenoid biosynthesis. In terms of biological role, sesterterpene cyclase, which converts geranylfarnesyl diphosphate (GFPP) into the terpenes somaliensene A and somaliensene B. The chain is Somaliensene A/B synthase from Streptomyces somaliensis (strain ATCC 33201 / DSM 40738 / JCM 12659 / KCTC 9044 / NCTC 11332 / NRRL B-12077 / IP 733).